The following is a 345-amino-acid chain: Viral Fc-gamma receptor-like protein UL119 (345 aa).

The first 23 residues, 1-23 (MCSVLAIALVVALLGDMHPGVKS), serve as a signal peptide directing secretion. The interval 23-43 (SSTTSAVTSPSNTTVTSTTSI) is disordered. The Virion surface segment spans residues 24-293 (STTSAVTSPS…IKSDPLFEDR (270 aa)). Residues Asn-34, Asn-48, Asn-95, Asn-104, Asn-148, Asn-179, Asn-198, Asn-217, Asn-225, Asn-241, Asn-244, and Asn-260 are each glycosylated (N-linked (GlcNAc...) asparagine; by host). Residues 91 to 190 (QVSLNATCKV…TWDLFTYPIY (100 aa)) form the Ig-like V-type domain. Residues 294–314 (LLAYGVLAFLVFMVIILLYVT) form a helical membrane-spanning segment. The Intravirion portion of the chain corresponds to 315–345 (YMLARRRDWSYKRLEEPVEEKKHPVPYFKQW).

It localises to the virion membrane. Its function is as follows. Serves as a receptor for the Fc part of human IgG. May thus be involved in interfering with host Ig-mediated immune responses. This chain is Viral Fc-gamma receptor-like protein UL119 (UL119/UL118), found in Homo sapiens (Human).